Here is a 556-residue protein sequence, read N- to C-terminus: Phosphoenolpyruvate-protein phosphotransferase (556 aa).

Residue His186 is the Tele-phosphohistidine intermediate of the active site. Positions 288 and 325 each coordinate phosphoenolpyruvate. The Mg(2+) site is built by Glu415 and Asp439. Phosphoenolpyruvate-binding positions include 438 to 439 (ND) and Arg449. Catalysis depends on Cys486, which acts as the Proton donor.

Belongs to the PEP-utilizing enzyme family. In terms of assembly, homodimer. Mg(2+) serves as cofactor.

The protein resides in the cytoplasm. It carries out the reaction L-histidyl-[protein] + phosphoenolpyruvate = N(pros)-phospho-L-histidyl-[protein] + pyruvate. Its function is as follows. General (non sugar-specific) component of the phosphoenolpyruvate-dependent sugar phosphotransferase system (sugar PTS). This major carbohydrate active-transport system catalyzes the phosphorylation of incoming sugar substrates concomitantly with their translocation across the cell membrane. Enzyme I transfers the phosphoryl group from phosphoenolpyruvate (PEP) to the phosphoryl carrier protein (HPr). The sequence is that of Phosphoenolpyruvate-protein phosphotransferase (ptsI) from Streptomyces coelicolor (strain ATCC BAA-471 / A3(2) / M145).